A 91-amino-acid chain; its full sequence is Acylphosphatase (91 aa).

The Acylphosphatase-like domain maps to threonine 3–tyrosine 91. Active-site residues include arginine 18 and asparagine 36.

This sequence belongs to the acylphosphatase family.

It catalyses the reaction an acyl phosphate + H2O = a carboxylate + phosphate + H(+). The sequence is that of Acylphosphatase (acyP) from Lactobacillus gasseri (strain ATCC 33323 / DSM 20243 / BCRC 14619 / CIP 102991 / JCM 1131 / KCTC 3163 / NCIMB 11718 / NCTC 13722 / AM63).